A 790-amino-acid chain; its full sequence is Probable quinate dehydrogenase (quinone) (790 aa).

4 helical membrane passes run 22–42, 48–68, 77–94, and 106–126; these read GSWYFLLMGLATALAGVLIVL, ALVYGVAFALTLVWALWDAGL, LMLPAAFAVLVALAWPAL, and AYGVATVLALAVVAGIGGMFV. Residues 171-200 form a disordered region; it reads RSNGRPAAGSPGPTTPGEIANSDGNGAEDQ. A compositionally biased stretch (low complexity) spans 174–187; that stretch reads GRPAAGSPGPTTPG.

It belongs to the bacterial PQQ dehydrogenase family. Pyrroloquinoline quinone serves as cofactor.

Its subcellular location is the cell membrane. It carries out the reaction L-quinate + a quinone = 3-dehydroquinate + a quinol. It participates in aromatic compound metabolism; 3,4-dihydroxybenzoate biosynthesis; 3-dehydroquinate from D-quinate (PQQ route): step 1/1. In Xanthomonas campestris pv. juglandis (Xanthomonas arboricola pv. juglandis), this protein is Probable quinate dehydrogenase (quinone) (qumA).